The primary structure comprises 388 residues: MAMRVETNPLEAAYAALLENGLDGAGEALRILVNEAAKIERSAFLGARPYERTETRRDYANGFKPKTVLTRHGELTFQVPQVRSSDFYPSALEKGTRTDQAVNLALAEMYVQGVSTRRVIDVLQRLLGPEISLSSAQVSRAAAKLDEGLRAWRERPLGETPYLFLDARYEKVRLEGRIVDCAVLIAVGIEASGKRRVLGCEVATSEAEINWRRFLESLLARGLKGVTLIIADDHAGLKAARRAVLPSVPWQRCQFHLQQNAGALTTRQEARKTVAAQMRAIFNAPDRTEAERLLKAALTLWCKEHPKLAEWAETAIPESLTVFDFPAAHRIRLRTTNGLERINRELRRRTRVASIFPNPDSCLRLVSALLAELDDEWMTGKVYLNFNP.

The protein belongs to the transposase mutator family.

Functionally, required for the transposition of the insertion element. The sequence is that of Transposase for insertion sequence element IS406 from Burkholderia multivorans (strain ATCC 17616 / 249).